Consider the following 107-residue polypeptide: uncharacterized protein (107 aa).

Residues 13 to 33 traverse the membrane as a helical segment; sequence VLIVTFLSSFIFIVWLPVALV.

It localises to the membrane. This is an uncharacterized protein from Saccharomyces cerevisiae (strain ATCC 204508 / S288c) (Baker's yeast).